Consider the following 354-residue polypeptide: Homer protein homolog 2 (354 aa).

Residues 1-110 (MGEQPIFTTR…EKFQEVREAA (110 aa)) enclose the WH1 domain. The stretch at 92-120 (SEQQLTKFAEKFQEVREAARLARDKSQEK) forms a coiled coil. A disordered region spans residues 114 to 163 (RDKSQEKIETSSNHSQESGCETPSSTQASSVNGTDDEKASHASPADTHLK). Positions 123–146 (TSSNHSQESGCETPSSTQASSVNG) are enriched in polar residues. A coiled-coil region spans residues 160–329 (THLKSENDKL…RHLKGELKSF (170 aa)).

It belongs to the Homer family. As to quaternary structure, isoform 1 and isoform 2 encode coiled-coil structures that mediate homo- and heteromultimerization. Interacts with NFATC2; interaction is reduced by AKT activation. Interacts with NFATC1 and NFATC4. Interacts with DAGLA (via PPXXF motif); this interaction is required for the cell membrane localization of DAGLA. Constitutively expressed in the adult hippocampus.

The protein resides in the cytoplasm. It localises to the cell membrane. It is found in the postsynaptic density. Its subcellular location is the synapse. The protein localises to the cell projection. The protein resides in the stereocilium. Postsynaptic density scaffolding protein. Binds and cross-links cytoplasmic regions of GRM1, GRM5, ITPR1, DNM3, RYR1, RYR2, SHANK1 and SHANK3. By physically linking GRM1 and GRM5 with ER-associated ITPR1 receptors, it aids the coupling of surface receptors to intracellular calcium release. May also couple GRM1 to PI3 kinase through its interaction with AGAP2. Isoforms can be differently regulated and may play an important role in maintaining the plasticity at glutamatergic synapses. Required for normal hearing. Negatively regulates T cell activation by inhibiting the calcineurin-NFAT pathway. Acts by competing with calcineurin/PPP3CA for NFAT protein binding, hence preventing NFAT activation by PPP3CA. This chain is Homer protein homolog 2, found in Rattus norvegicus (Rat).